The chain runs to 240 residues: Proline-rich antigen homolog (240 aa).

Pro residues-rich tracts occupy residues 1–31 and 38–78; these read MTEQ…PAAP and APPP…PPGP. Residues 1 to 78 are disordered; sequence MTEQPPPGGS…GGYAPPPPGP (78 aa). One can recognise an RDD domain in the interval 89–233; sequence TPWITRVLAA…KRQTLADKIM (145 aa). 3 helical membrane passes run 98–118, 142–162, and 203–223; these read AFID…IMLV, SMIG…YLVW, and LAHF…LWDA.

This sequence belongs to the mycobacterial Pra family.

The protein localises to the cell membrane. This chain is Proline-rich antigen homolog, found in Mycobacterium tuberculosis (strain CDC 1551 / Oshkosh).